A 58-amino-acid polypeptide reads, in one-letter code: UPF0339 protein TDE_0826 (58 aa).

This sequence belongs to the UPF0339 family.

The protein is UPF0339 protein TDE_0826 of Treponema denticola (strain ATCC 35405 / DSM 14222 / CIP 103919 / JCM 8153 / KCTC 15104).